The following is an 886-amino-acid chain: Alanine--tRNA ligase (886 aa).

The Zn(2+) site is built by His564, His568, Cys676, and His680.

Belongs to the class-II aminoacyl-tRNA synthetase family. Zn(2+) is required as a cofactor.

It localises to the cytoplasm. It catalyses the reaction tRNA(Ala) + L-alanine + ATP = L-alanyl-tRNA(Ala) + AMP + diphosphate. Functionally, catalyzes the attachment of alanine to tRNA(Ala) in a two-step reaction: alanine is first activated by ATP to form Ala-AMP and then transferred to the acceptor end of tRNA(Ala). Also edits incorrectly charged Ser-tRNA(Ala) and Gly-tRNA(Ala) via its editing domain. This is Alanine--tRNA ligase from Bartonella bacilliformis (strain ATCC 35685 / KC583 / Herrer 020/F12,63).